The primary structure comprises 405 residues: Putative colanic acid biosynthesis glycosyl transferase WcaC (405 aa).

It participates in slime biogenesis; slime polysaccharide biosynthesis. The sequence is that of Putative colanic acid biosynthesis glycosyl transferase WcaC (wcaC) from Escherichia coli (strain K12).